A 627-amino-acid polypeptide reads, in one-letter code: Xaa-Pro aminopeptidase 1 (627 aa).

A peptide-binding residues include Arg-88 and His-405. Positions 424, 435, and 498 each coordinate Mn(2+). The a peptide site is built by His-498, His-507, and Glu-533. Mn(2+)-binding residues include Glu-533 and Glu-547.

This sequence belongs to the peptidase M24B family. Homodimer. It depends on Mn(2+) as a cofactor.

It is found in the cytoplasm. The protein resides in the cytosol. It carries out the reaction Release of any N-terminal amino acid, including proline, that is linked to proline, even from a dipeptide or tripeptide.. Functionally, metalloaminopeptidase that catalyzes the removal of a penultimate prolyl residue from the N-termini of peptides, such as Arg-Pro-Pro. This is Xaa-Pro aminopeptidase 1 (xpnpep1) from Dictyostelium discoideum (Social amoeba).